Reading from the N-terminus, the 530-residue chain is Tryptophan 7-halogenase RebH (530 aa).

FAD is bound by residues Gly13, Thr15, Ala16, Ala39, Asp41, Glu49, and Ala50. Lys79 is an active-site residue. FAD-binding residues include Val197 and Thr348. Glu357 contacts L-tryptophan. Positions 359 and 360 each coordinate chloride. Ile361 contacts FAD. L-tryptophan-binding residues include Tyr454, Tyr455, Glu461, and Phe465.

It belongs to the flavin-dependent halogenase family. Bacterial tryptophan halogenase subfamily. In terms of assembly, homodimer.

It catalyses the reaction L-tryptophan + FADH2 + chloride + O2 = 7-chloro-L-tryptophan + FAD + 2 H2O. Involved in the biosynthesis of the indolocarbazole antitumor agent rebeccamycin. Catalyzes the chlorination of tryptophan (Trp) at C7 position to yield 7-chlorotryptophan. It is also able to use bromide ions to generate monobrominated Trp. This Lentzea aerocolonigenes (Lechevalieria aerocolonigenes) protein is Tryptophan 7-halogenase RebH (rebH).